A 188-amino-acid polypeptide reads, in one-letter code: MILPINIYNDEVLRATAKPLKGIDRNIRDLVASMLESMRNASGIGLAAPQVGCSIRLLVIDLSCMEKYADEKPVVVINPHLLAVKGYNAMEEGCLSLPGILGDVVRPSSITLKYRDEHFEERTGEFSGMMARVLQHEIDHLDGKLFIDRMQKRDRRKIDKELHSLAIGNVEADYPLALAGIAQKACEA.

Cysteine 94 and histidine 136 together coordinate Fe cation. Residue glutamate 137 is part of the active site. A Fe cation-binding site is contributed by histidine 140.

The protein belongs to the polypeptide deformylase family. Fe(2+) serves as cofactor.

It carries out the reaction N-terminal N-formyl-L-methionyl-[peptide] + H2O = N-terminal L-methionyl-[peptide] + formate. Functionally, removes the formyl group from the N-terminal Met of newly synthesized proteins. Requires at least a dipeptide for an efficient rate of reaction. N-terminal L-methionine is a prerequisite for activity but the enzyme has broad specificity at other positions. The sequence is that of Peptide deformylase from Chlorobium phaeobacteroides (strain DSM 266 / SMG 266 / 2430).